We begin with the raw amino-acid sequence, 95 residues long: Protein TusB (95 aa).

Belongs to the DsrH/TusB family. As to quaternary structure, heterohexamer, formed by a dimer of trimers. The hexameric TusBCD complex contains 2 copies each of TusB, TusC and TusD. The TusBCD complex interacts with TusE.

It localises to the cytoplasm. Part of a sulfur-relay system required for 2-thiolation of 5-methylaminomethyl-2-thiouridine (mnm(5)s(2)U) at tRNA wobble positions. This Enterobacter sp. (strain 638) protein is Protein TusB.